The following is a 940-amino-acid chain: Valine--tRNA ligase (940 aa).

The short motif at 47–57 (PNVTGVLHMGH) is the 'HIGH' region element. A 'KMSKS' region motif is present at residues 564–568 (KLSKS). Lys-567 lines the ATP pocket. Residues 873–905 (EEHLLKEKGRLEKERVRLERAVENLERLLGDES) are a coiled coil.

The protein belongs to the class-I aminoacyl-tRNA synthetase family. ValS type 1 subfamily. In terms of assembly, monomer.

The protein resides in the cytoplasm. The enzyme catalyses tRNA(Val) + L-valine + ATP = L-valyl-tRNA(Val) + AMP + diphosphate. Its function is as follows. Catalyzes the attachment of valine to tRNA(Val). As ValRS can inadvertently accommodate and process structurally similar amino acids such as threonine, to avoid such errors, it has a 'posttransfer' editing activity that hydrolyzes mischarged Thr-tRNA(Val) in a tRNA-dependent manner. The sequence is that of Valine--tRNA ligase from Chlamydia pneumoniae (Chlamydophila pneumoniae).